The chain runs to 299 residues: Ribosomal protein L11 methyltransferase (299 aa).

S-adenosyl-L-methionine-binding residues include Thr139, Gly166, Asp188, and Asn231.

It belongs to the methyltransferase superfamily. PrmA family.

It localises to the cytoplasm. The enzyme catalyses L-lysyl-[protein] + 3 S-adenosyl-L-methionine = N(6),N(6),N(6)-trimethyl-L-lysyl-[protein] + 3 S-adenosyl-L-homocysteine + 3 H(+). Its function is as follows. Methylates ribosomal protein L11. This is Ribosomal protein L11 methyltransferase from Thermosynechococcus vestitus (strain NIES-2133 / IAM M-273 / BP-1).